The sequence spans 197 residues: 3-isopropylmalate dehydratase small subunit (197 aa).

It belongs to the LeuD family. LeuD type 1 subfamily. Heterodimer of LeuC and LeuD.

It carries out the reaction (2R,3S)-3-isopropylmalate = (2S)-2-isopropylmalate. It functions in the pathway amino-acid biosynthesis; L-leucine biosynthesis; L-leucine from 3-methyl-2-oxobutanoate: step 2/4. Its function is as follows. Catalyzes the isomerization between 2-isopropylmalate and 3-isopropylmalate, via the formation of 2-isopropylmaleate. The chain is 3-isopropylmalate dehydratase small subunit from Geobacillus sp. (strain WCH70).